The following is a 474-amino-acid chain: Pyoverdine export outer membrane protein OpmQ (474 aa).

The signal sequence occupies residues 1–17 (MSMKNLSLISACLLLGA). Cysteine 18 carries the N-palmitoyl cysteine lipid modification. Cysteine 18 is lipidated: S-diacylglycerol cysteine.

The protein belongs to the outer membrane factor (OMF) (TC 1.B.17) family. Part of the tripartite efflux system PvdRT-OpmQ, which is composed of an inner membrane component with both ATPase and permease domains, PvdT, a periplasmic membrane fusion protein, PvdR, and an outer membrane component, OpmQ.

The protein resides in the cell outer membrane. Part of the tripartite efflux system PvdRT-OpmQ required for the secretion into the extracellular milieu of the siderophore pyoverdine (PVD), which is involved in iron acquisition. The system is responsible for export of newly synthesized PVD after the final steps of biosynthesis have taken place in the periplasm. It is also responsible for recycling of PVD after internalization of ferri-PVD into the periplasm by the outer-membrane receptor FpvA and release of iron from PVD, thus making PVD available for new cycles of iron uptake. In addition, can expel unwanted metals complexed with PVD from the periplasm into the extracellular medium. The sequence is that of Pyoverdine export outer membrane protein OpmQ from Pseudomonas aeruginosa (strain ATCC 15692 / DSM 22644 / CIP 104116 / JCM 14847 / LMG 12228 / 1C / PRS 101 / PAO1).